Consider the following 389-residue polypeptide: Protein P4 (389 aa).

The chain is Protein P4 from Rice tungro bacilliform virus (isolate Philippines) (RTBV).